The following is a 432-amino-acid chain: Glutamate-1-semialdehyde 2,1-aminomutase (432 aa).

Lys-272 carries the N6-(pyridoxal phosphate)lysine modification.

The protein belongs to the class-III pyridoxal-phosphate-dependent aminotransferase family. HemL subfamily. In terms of assembly, homodimer. Requires pyridoxal 5'-phosphate as cofactor.

It is found in the cytoplasm. It catalyses the reaction (S)-4-amino-5-oxopentanoate = 5-aminolevulinate. Its pathway is porphyrin-containing compound metabolism; protoporphyrin-IX biosynthesis; 5-aminolevulinate from L-glutamyl-tRNA(Glu): step 2/2. The protein operates within porphyrin-containing compound metabolism; chlorophyll biosynthesis. This is Glutamate-1-semialdehyde 2,1-aminomutase from Acaryochloris marina (strain MBIC 11017).